Reading from the N-terminus, the 810-residue chain is Protein 4.1 (810 aa).

Residues 1–124 form a disordered region; that stretch reads MTTEKSLVAE…KEIEFGTSLD (124 aa). A Phosphoserine modification is found at Ser14. Thr61 bears the Phosphothreonine mark. Basic and acidic residues predominate over residues 62–76; it reads PTHEDLTKNKERTSE. Phosphoserine is present on residues Ser85, Ser86, Ser96, Ser105, Ser122, Ser150, Ser152, Ser153, Ser189, and Ser192. Residues 102 to 118 are compositionally biased toward basic and acidic residues; sequence DVESAKEKCEGGQKEIE. A disordered region spans residues 152-203; that stretch reads SSAETQPAQEEHREDPDFETKEGGGLEECSKIEVKEESPESKAERELKASQK. A compositionally biased stretch (basic and acidic residues) spans 160–200; the sequence is QEEHREDPDFETKEGGGLEECSKIEVKEESPESKAERELKA. The 282-residue stretch at 211 to 492 folds into the FERM domain; the sequence is MHCKVSLLDD…EHHTFFRLTS (282 aa). Tyr223 is subject to Phosphotyrosine. Thr379 bears the Phosphothreonine mark. Residues 518 to 613 are disordered; sequence TRQASALIDR…DQAEPEPTEV (96 aa). Phosphoserine occurs at positions 522, 541, 543, and 555. Residues 587–601 are compositionally biased toward basic and acidic residues; it reads AQKETVKDEEKKEEG. Residues 615 to 659 are spectrin--actin-binding; that stretch reads KDLDKSQEEIKKHHASISELKKNFMESVPEPRPSEWDKRLSTHSP. Phosphoserine is present on residues Ser620, Ser630, Ser655, and Ser658. Positions 660–810 are C-terminal (CTD); it reads FRTLNINGQL…VHQETEISEE (151 aa). 2 positions are modified to phosphothreonine: Thr682 and Thr805.

In terms of assembly, binds with a high affinity to glycophorin and with lower affinity to band III protein. Associates with the nuclear mitotic apparatus. Binds calmodulin, CPAP and DLG1. Also found to associate with contractile apparatus and tight junctions. Interacts with NUMA1; this interaction is negatively regulated by CDK1 during metaphase and promotes for anaphase-specific localization of NUMA1 in symmetrically dividing cells. Interacts with ATP2B1; regulates small intestinal calcium absorption through regulation of membrane expression of ATP2B1. O-glycosylated; contains N-acetylglucosamine side chains in the C-terminal domain. In terms of processing, phosphorylated at multiple sites by different protein kinases and each phosphorylation event selectively modulates the protein's functions.

Its subcellular location is the nucleus. It is found in the cytoplasm. It localises to the cytoskeleton. The protein resides in the cell cortex. Protein 4.1 is a major structural element of the erythrocyte membrane skeleton. It plays a key role in regulating membrane physical properties of mechanical stability and deformability by stabilizing spectrin-actin interaction. Recruits DLG1 to membranes. Required for dynein-dynactin complex and NUMA1 recruitment at the mitotic cell cortex during anaphase. In Canis lupus familiaris (Dog), this protein is Protein 4.1.